The sequence spans 969 residues: Protein translocase subunit SecA (969 aa).

ATP-binding positions include Gln-99, 117–121 (GEGKT), and Asp-631.

It belongs to the SecA family. In terms of assembly, monomer and homodimer. Part of the essential Sec protein translocation apparatus which comprises SecA, SecYEG and auxiliary proteins SecDF. Other proteins may also be involved.

It is found in the cell inner membrane. Its subcellular location is the cytoplasm. The catalysed reaction is ATP + H2O + cellular proteinSide 1 = ADP + phosphate + cellular proteinSide 2.. In terms of biological role, part of the Sec protein translocase complex. Interacts with the SecYEG preprotein conducting channel. Has a central role in coupling the hydrolysis of ATP to the transfer of proteins into and across the cell membrane, serving as an ATP-driven molecular motor driving the stepwise translocation of polypeptide chains across the membrane. This Chlamydia trachomatis serovar A (strain ATCC VR-571B / DSM 19440 / HAR-13) protein is Protein translocase subunit SecA.